Here is a 233-residue protein sequence, read N- to C-terminus: GSK-3-binding protein FRAT2 (233 aa).

Positions 1-24 (MPCRREEEEEAGEEAEGEEEEDDS) are disordered. The span at 7-24 (EEEEAGEEAEGEEEEDDS) shows a compositional bias: acidic residues. The segment at 174–196 (DPHRLLQQLVLSGNLIKEAVRRL) is involved in GSK-3 binding. The interval 204-233 (AATGPASAPGPGGGRSGPDRIALQPSGSLL) is disordered.

It belongs to the GSK-3-binding protein family. Binds GSK-3 and prevents GSK-3-dependent phosphorylation.

Positively regulates the Wnt signaling pathway by stabilizing beta-catenin through the association with GSK-3. The chain is GSK-3-binding protein FRAT2 (FRAT2) from Homo sapiens (Human).